Reading from the N-terminus, the 1117-residue chain is Protocadherin-11 X-linked (1117 aa).

A signal peptide spans 1 to 23 (MDLLSGTHIFAVLLACIVFQSGA). Residues 24 to 812 (QEKNYTIREE…ASSPSSDYVK (789 aa)) lie on the Extracellular side of the membrane. Asn27 and Asn48 each carry an N-linked (GlcNAc...) asparagine glycan. Cadherin domains are found at residues 27–139 (NYTI…APLF), 140–249 (PATV…RPVF), 250–355 (KENE…IPSI), 362–466 (NPIN…APVF), 467–570 (TQPF…SPVF), 571–673 (THNE…KPVF), and 677–795 (SSNY…TPVT). The N-linked (GlcNAc...) asparagine glycan is linked to Asn344. Residue Asn553 is glycosylated (N-linked (GlcNAc...) asparagine). Residues 813-833 (IVVAIVAGTITVILVIFITAV) form a helical membrane-spanning segment. Topologically, residues 834–1117 (VRCQQSPHLK…DGNSDPESGK (284 aa)) are cytoplasmic. The span at 1029–1039 (TVEIWTHPQPQ) shows a compositional bias: polar residues. The disordered stretch occupies residues 1029 to 1117 (TVEIWTHPQP…DGNSDPESGK (89 aa)).

As to expression, expressed in adrenal gland, brain, heart, kidney, lung, prostate, skeletal muscle, testis and thymus.

It is found in the cell membrane. Functionally, potential calcium-dependent cell-adhesion protein. The polypeptide is Protocadherin-11 X-linked (PCDH11X) (Sus scrofa (Pig)).